A 134-amino-acid polypeptide reads, in one-letter code: DNA-directed RNA polymerase subunit omega (134 aa).

The interval 77-108 (IDEPEPDPASLLAAGGNASASGDEEEDAPEAV) is disordered. Over residues 85–97 (ASLLAAGGNASAS) the composition is skewed to low complexity.

This sequence belongs to the RNA polymerase subunit omega family. In terms of assembly, the RNAP catalytic core consists of 2 alpha, 1 beta, 1 beta' and 1 omega subunit. When a sigma factor is associated with the core the holoenzyme is formed, which can initiate transcription.

It catalyses the reaction RNA(n) + a ribonucleoside 5'-triphosphate = RNA(n+1) + diphosphate. In terms of biological role, promotes RNA polymerase assembly. Latches the N- and C-terminal regions of the beta' subunit thereby facilitating its interaction with the beta and alpha subunits. This chain is DNA-directed RNA polymerase subunit omega, found in Rhizobium rhizogenes (strain K84 / ATCC BAA-868) (Agrobacterium radiobacter).